The following is a 114-amino-acid chain: Cyclin-dependent kinase 2-associated protein 1 (114 aa).

The interval 18–57 (AGSVHSPSTSMATSSQYRQLLSDYGPPSLGYTQGTGNSQV) is disordered. The tract at residues 19–24 (GSVHSP) is interaction with CDK2AP2. Over residues 20 to 36 (SVHSPSTSMATSSQYRQ) the composition is skewed to polar residues. At S45 the chain carries Phosphoserine; by IKKE. The span at 47-57 (GYTQGTGNSQV) shows a compositional bias: polar residues.

Belongs to the CDK2AP family. Homodimer. Component of the nucleosome remodeling and deacetylase (NuRD) repressor complex, composed of core proteins MTA1, MTA2, MTA3, RBBP4, RBBP7, HDAC1, HDAC2, MBD2, MBD3, and peripherally associated proteins CDK2AP1, CDK2AP2, GATAD2A, GATAD2B, CHD3, CHD4 and CHD5. The exact stoichiometry of the NuRD complex is unknown, and some subunits such as MBD2 and MBD3, GATAD2A and GATAD2B, and CHD3, CHD4 and CHD5 define mutually exclusive NuRD complexes. Interacts with monomeric unphosphorylated CDK2. Interacts with CDK2AP2. Interacts with GATAD2A. Interacts with HDAC1. Interacts with HDAC2. Interacts with MBD2. Interacts with MBD3. Interacts with RBBP4. Interacts with RBBP7. In terms of processing, phosphorylated in vitro by IKBKE at Ser-45.

It localises to the nucleus. It is found in the chromosome. Its function is as follows. Inhibitor of cyclin-dependent kinase CDK2. Also acts as a component of the histone deacetylase NuRD complex which participates in the remodeling of chromatin. The protein is Cyclin-dependent kinase 2-associated protein 1 (Cdk2ap1) of Mus musculus (Mouse).